Consider the following 311-residue polypeptide: Putative dihydroorotate dehydrogenase A (fumarate) (311 aa).

Residues Lys-45, Asn-69–Leu-73, and Asn-128 contribute to the substrate site. Lys-45–Thr-46 serves as a coordination point for FMN. Asn-128 is a binding site for FMN. Catalysis depends on Cys-131, which acts as the Nucleophile. 2 residues coordinate FMN: Lys-165 and Val-193. Asn-194–Ser-195 is a binding site for substrate. Residues Gly-220, Gly-248–Gly-249, and Gly-270–Thr-271 each bind FMN.

Belongs to the dihydroorotate dehydrogenase family. Type 1 subfamily. As to quaternary structure, homodimer. The cofactor is FMN.

It is found in the cytoplasm. The enzyme catalyses (S)-dihydroorotate + fumarate = orotate + succinate. Its pathway is pyrimidine metabolism; UMP biosynthesis via de novo pathway. In terms of biological role, catalyzes the conversion of dihydroorotate to orotate with fumarate as the electron acceptor. This is Putative dihydroorotate dehydrogenase A (fumarate) (pyrD) from Streptococcus pyogenes serotype M18 (strain MGAS8232).